Reading from the N-terminus, the 116-residue chain is Ribonuclease P protein component (116 aa).

The protein belongs to the RnpA family. In terms of assembly, consists of a catalytic RNA component (M1 or rnpB) and a protein subunit.

The catalysed reaction is Endonucleolytic cleavage of RNA, removing 5'-extranucleotides from tRNA precursor.. Its function is as follows. RNaseP catalyzes the removal of the 5'-leader sequence from pre-tRNA to produce the mature 5'-terminus. It can also cleave other RNA substrates such as 4.5S RNA. The protein component plays an auxiliary but essential role in vivo by binding to the 5'-leader sequence and broadening the substrate specificity of the ribozyme. The polypeptide is Ribonuclease P protein component (Geobacter sp. (strain M21)).